Reading from the N-terminus, the 485-residue chain is Aspartyl/glutamyl-tRNA(Asn/Gln) amidotransferase subunit B (485 aa).

This sequence belongs to the GatB/GatE family. GatB subfamily. In terms of assembly, heterotrimer of A, B and C subunits.

It catalyses the reaction L-glutamyl-tRNA(Gln) + L-glutamine + ATP + H2O = L-glutaminyl-tRNA(Gln) + L-glutamate + ADP + phosphate + H(+). The enzyme catalyses L-aspartyl-tRNA(Asn) + L-glutamine + ATP + H2O = L-asparaginyl-tRNA(Asn) + L-glutamate + ADP + phosphate + 2 H(+). In terms of biological role, allows the formation of correctly charged Asn-tRNA(Asn) or Gln-tRNA(Gln) through the transamidation of misacylated Asp-tRNA(Asn) or Glu-tRNA(Gln) in organisms which lack either or both of asparaginyl-tRNA or glutaminyl-tRNA synthetases. The reaction takes place in the presence of glutamine and ATP through an activated phospho-Asp-tRNA(Asn) or phospho-Glu-tRNA(Gln). This chain is Aspartyl/glutamyl-tRNA(Asn/Gln) amidotransferase subunit B, found in Paramagnetospirillum magneticum (strain ATCC 700264 / AMB-1) (Magnetospirillum magneticum).